Reading from the N-terminus, the 316-residue chain is Cell surface superoxide dismutase [Cu-Zn] 6 (316 aa).

The N-terminal stretch at 1–18 is a signal peptide; it reads MIFIPIIILIYLVSIAAS. Cu cation-binding residues include His78, His80, and His96. Zn(2+) is bound by residues His96 and Asp119. An N-linked (GlcNAc...) asparagine glycan is attached at Asn128. A Cu cation-binding site is contributed by His159. 2 N-linked (GlcNAc...) asparagine glycosylation sites follow: Asn162 and Asn240. Residues 243 to 263 form a disordered region; that stretch reads DNVYSPEETRPSDQNKKSHRH. The span at 249-258 shows a compositional bias: basic and acidic residues; the sequence is EETRPSDQNK. N-linked (GlcNAc...) asparagine glycosylation is found at Asn278 and Asn281. The GPI-anchor amidated serine moiety is linked to residue Ser288. The propeptide at 289-316 is removed in mature form; the sequence is SDCLNDGMMVTGSVFGSLVLGIAAGIFV.

This sequence belongs to the Cu-Zn superoxide dismutase family. Requires Cu cation as cofactor. Zn(2+) is required as a cofactor. Post-translationally, the GPI-anchor is attached to the protein in the endoplasmic reticulum and serves to target the protein to the cell surface. There, the glucosamine-inositol phospholipid moiety is cleaved off and the GPI-modified mannoprotein is covalently attached via its lipidless GPI glycan remnant to the 1,6-beta-glucan of the outer cell wall layer.

It localises to the secreted. The protein localises to the cell wall. The protein resides in the membrane. It carries out the reaction 2 superoxide + 2 H(+) = H2O2 + O2. Superoxide dismutases serve to convert damaging superoxide radicals, a key form of ROS, to less damaging hydrogen peroxide that can be converted into water by catalase action. May be involved protection against extracellular stress. The chain is Cell surface superoxide dismutase [Cu-Zn] 6 (SOD6) from Candida albicans (strain SC5314 / ATCC MYA-2876) (Yeast).